The primary structure comprises 300 residues: tRNA dimethylallyltransferase (300 aa).

An ATP-binding site is contributed by 11-18 (GPTAVGKS). 13-18 (TAVGKS) provides a ligand contact to substrate. Residues 35–38 (DSIQ) are interaction with substrate tRNA.

The protein belongs to the IPP transferase family. As to quaternary structure, monomer. The cofactor is Mg(2+).

It catalyses the reaction adenosine(37) in tRNA + dimethylallyl diphosphate = N(6)-dimethylallyladenosine(37) in tRNA + diphosphate. Its function is as follows. Catalyzes the transfer of a dimethylallyl group onto the adenine at position 37 in tRNAs that read codons beginning with uridine, leading to the formation of N6-(dimethylallyl)adenosine (i(6)A). The sequence is that of tRNA dimethylallyltransferase from Borrelia turicatae (strain 91E135).